Consider the following 251-residue polypeptide: Probable transcriptional regulatory protein MSMEG_2940/MSMEI_2866 (251 aa).

The protein belongs to the TACO1 family.

Its subcellular location is the cytoplasm. The protein is Probable transcriptional regulatory protein MSMEG_2940/MSMEI_2866 of Mycolicibacterium smegmatis (strain ATCC 700084 / mc(2)155) (Mycobacterium smegmatis).